We begin with the raw amino-acid sequence, 751 residues long: Polyadenylate-binding protein, cytoplasmic and nuclear (751 aa).

Composition is skewed to polar residues over residues 1 to 26 (MSAE…NPAA) and 36 to 50 (ESAS…NQPH). Positions 1–50 (MSAEVSTTPAADNTVNGTPEATNPAATSAPEVTAVESASPSATPSANQPH) are disordered. 4 RRM domains span residues 52-130 (ASLY…WSQR), 140-217 (GNVF…HHIS), 233-310 (TNVY…RAQK), and 336-458 (VNLY…LAQR). 2 disordered regions span residues 371–413 (TVTA…KKTE) and 601–643 (GQGM…REEV). Over residues 379–413 (ESEKEKESNKENEKEGEEKTEEKPKESEEEAKKTE) the composition is skewed to basic and acidic residues. Gly residues predominate over residues 603–629 (GMRGPGYGQGRGGAPVQGGPRPQGGRG). Residues 646–723 (TGGLTAQTLN…ALSVYDEYMK (78 aa)) form the PABC domain. The tract at residues 725–751 (KGEGEAPAEPAKPKEDAAETATEENKS) is disordered. Residues 735–751 (AKPKEDAAETATEENKS) are compositionally biased toward basic and acidic residues.

The protein belongs to the polyadenylate-binding protein type-1 family.

It localises to the cytoplasm. The protein localises to the nucleus. Functionally, binds the poly(A) tail of mRNA. Appears to be an important mediator of the multiple roles of the poly(A) tail in mRNA biogenesis, stability and translation. In the nucleus, involved in both mRNA cleavage and polyadenylation. Is also required for efficient mRNA export to the cytoplasm. Acts in concert with a poly(A)-specific nuclease (PAN) to affect poly(A) tail shortening, which may occur concomitantly with either nucleocytoplasmic mRNA transport or translational initiation. In the cytoplasm, stimulates translation initiation and regulates mRNA decay through translation termination-coupled poly(A) shortening, probably mediated by PAN. The sequence is that of Polyadenylate-binding protein, cytoplasmic and nuclear (pab1) from Neosartorya fischeri (strain ATCC 1020 / DSM 3700 / CBS 544.65 / FGSC A1164 / JCM 1740 / NRRL 181 / WB 181) (Aspergillus fischerianus).